We begin with the raw amino-acid sequence, 353 residues long: Rhodopsin (353 aa).

The Extracellular segment spans residues 1 to 36 (MNGTEGPFFYVPMVNTTGIVRSPYDYPQYYLVSPAA). Residues N2 and N15 are each glycosylated (N-linked (GlcNAc...) asparagine). A helical membrane pass occupies residues 37–61 (YAALGAYMFLLILLGFPINFLTLYV). The Cytoplasmic portion of the chain corresponds to 62–73 (TIEHKKLRTPLN). A helical membrane pass occupies residues 74–96 (YILLNLAVADLFMVFGGFTTTMY). At 97-110 (TSMHGYFVLGRLGC) the chain is on the extracellular side. C110 and C187 are oxidised to a cystine. A helical membrane pass occupies residues 111 to 133 (NMEGFFATLGGEIGLWSLVVLAV). The 'Ionic lock' involved in activated form stabilization signature appears at 134-136 (ERW). Topologically, residues 134–152 (ERWLVVCKPISNFRFGENH) are cytoplasmic. Residues 153 to 173 (AIMGLAFTWVMACSCAVPPLV) form a helical membrane-spanning segment. Over 174–202 (GWSRYIPEGMQCSCGVDYYTRAEGFNNES) the chain is Extracellular. A glycan (N-linked (GlcNAc...) asparagine) is linked at N200. The helical transmembrane segment at 203–224 (FVIYMFACHFIIPMCVVFFCYG) threads the bilayer. Residues 225–252 (RLLCAVKEAAAAQQESETTQRAEKEVTR) lie on the Cytoplasmic side of the membrane. The chain crosses the membrane as a helical span at residues 253–274 (MVVIMGIAFLICWCPYASVAWY). Residues 275 to 286 (IFTHQGSEFGPV) are Extracellular-facing. Residues 287–308 (FMTLPAFFAKTSSVYNPLIYIL) form a helical membrane-spanning segment. The residue at position 296 (K296) is an N6-(retinylidene)lysine. Over 309–353 (MNKQFRHCMITTLCCGKNPFEEEEGASTASKTEASSVSSSSVSPA) the chain is Cytoplasmic. Residues C322 and C323 are each lipidated (S-palmitoyl cysteine). The tract at residues 331 to 353 (EEGASTASKTEASSVSSSSVSPA) is disordered. The span at 334–353 (ASTASKTEASSVSSSSVSPA) shows a compositional bias: low complexity.

This sequence belongs to the G-protein coupled receptor 1 family. Opsin subfamily. Phosphorylated on some or all of the serine and threonine residues present in the C-terminal region. Post-translationally, contains one covalently linked retinal chromophore.

It is found in the membrane. The protein resides in the cell projection. The protein localises to the cilium. Its subcellular location is the photoreceptor outer segment. Its function is as follows. Photoreceptor required for image-forming vision at low light intensity. While most salt water fish species use retinal as chromophore, most freshwater fish use 3-dehydroretinal, or a mixture of retinal and 3-dehydroretinal. Light-induced isomerization of 11-cis to all-trans retinal triggers a conformational change that activates signaling via G-proteins. Subsequent receptor phosphorylation mediates displacement of the bound G-protein alpha subunit by arrestin and terminates signaling. In Dicentrarchus labrax (European seabass), this protein is Rhodopsin (rho).